The chain runs to 467 residues: Cysteine--tRNA ligase (467 aa).

Cysteine 30 lines the Zn(2+) pocket. A 'HIGH' region motif is present at residues 32 to 42 (PTVYNYIHIGN). Zn(2+) is bound by residues cysteine 210, histidine 235, and glutamate 239. The short motif at 267–271 (KMSKS) is the 'KMSKS' region element. ATP is bound at residue lysine 270. The residue at position 271 (serine 271) is a Phosphoserine.

This sequence belongs to the class-I aminoacyl-tRNA synthetase family. As to quaternary structure, monomer. Zn(2+) is required as a cofactor.

It is found in the cytoplasm. It catalyses the reaction tRNA(Cys) + L-cysteine + ATP = L-cysteinyl-tRNA(Cys) + AMP + diphosphate. This chain is Cysteine--tRNA ligase, found in Geobacillus thermodenitrificans (strain NG80-2).